We begin with the raw amino-acid sequence, 399 residues long: Mycinamicin VI 2''-O-methyltransferase (399 aa).

S-adenosyl-L-methionine is bound by residues Thr-173, 202 to 208 (EIGVGGY), Ser-217, Asp-234, 252 to 253 (DQ), and Asp-275. Residue Asp-275 coordinates Mg(2+). His-278 acts as the Proton acceptor in catalysis. Mg(2+) is bound by residues Glu-303 and Asp-304.

The protein belongs to the methyltransferase OleY/MycE family. In terms of assembly, homotetramer. Requires Mg(2+) as cofactor.

The enzyme catalyses mycinamicin VI + S-adenosyl-L-methionine = mycinamicin III + S-adenosyl-L-homocysteine + H(+). It functions in the pathway antibiotic biosynthesis; mycinamicin biosynthesis. In terms of biological role, O-methyltransferase that catalyzes the conversion of mycinamicin VI to mycinamicin III in the biosynthesis of mycinamicin, a 16-membered macrolide antibiotic. This chain is Mycinamicin VI 2''-O-methyltransferase (mycE), found in Micromonospora griseorubida.